The following is a 919-amino-acid chain: Alanine--tRNA ligase (919 aa).

The Zn(2+) site is built by H565, H569, C667, and H671.

Belongs to the class-II aminoacyl-tRNA synthetase family. Zn(2+) serves as cofactor.

It localises to the cytoplasm. The catalysed reaction is tRNA(Ala) + L-alanine + ATP = L-alanyl-tRNA(Ala) + AMP + diphosphate. Its function is as follows. Catalyzes the attachment of alanine to tRNA(Ala) in a two-step reaction: alanine is first activated by ATP to form Ala-AMP and then transferred to the acceptor end of tRNA(Ala). Also edits incorrectly charged Ser-tRNA(Ala) and Gly-tRNA(Ala) via its editing domain. In Leptospira biflexa serovar Patoc (strain Patoc 1 / Ames), this protein is Alanine--tRNA ligase.